A 68-amino-acid chain; its full sequence is Peptide Smp13 (68 aa).

Positions 1–23 (MKTQFAIFLITLVLFQMFSQSDA) are cleaved as a signal peptide. Phe-36 carries the phenylalanine amide modification. A propeptide spanning residues 37–68 (GKRGLGDHDDLDELFDGEISQADIDFLKEIMQ) is cleaved from the precursor.

This sequence belongs to the non-disulfide-bridged peptide (NDBP) superfamily. Short antimicrobial peptide (group 4) family. In terms of tissue distribution, expressed by the venom gland.

The protein resides in the secreted. In terms of biological role, peptide with unknown function. Does not show antimicrobial activity against the Gram-positive, and Gram-negative bacteria tested, as well as against the fungus C.albicans. The protein is Peptide Smp13 of Scorpio palmatus (Israeli golden scorpion).